Consider the following 85-residue polypeptide: Photosystem I reaction center subunit PsaK (85 aa).

2 consecutive transmembrane segments (helical) span residues Thr12–Gly34 and Gly54–Ile76.

It belongs to the PsaG/PsaK family.

The protein resides in the cellular thylakoid membrane. The polypeptide is Photosystem I reaction center subunit PsaK (Parasynechococcus marenigrum (strain WH8102)).